The following is a 1648-amino-acid chain: Vitellogenin-6 (1648 aa).

The N-terminal stretch at 1 to 15 (MRFAVLLALFGLALA) is a signal peptide. A Vitellogenin domain is found at 26–691 (YRSGREYRYQ…SNDSVLPKEI (666 aa)). Disulfide bonds link Cys178–Cys203 and Cys219–Cys222. N-linked (GlcNAc...) asparagine glycans are attached at residues Asn237, Asn371, and Asn683. The tract at residues 1070-1092 (EKNVEYEQEDKEPKSSQLQSQIR) is disordered. An N-linked (GlcNAc...) asparagine glycan is attached at Asn1295. Residues 1346–1514 (PECIVKSKEI…SYLSKDDECE (169 aa)) enclose the VWFD domain. 2 cysteine pairs are disulfide-bonded: Cys1348-Cys1477 and Cys1370-Cys1513. Asn1584 and Asn1617 each carry an N-linked (GlcNAc...) asparagine glycan.

The precursor protein is probably further processed into vitellin polypeptides VT2 and VT3. Post-translationally, both VT2 and VT3 polypeptides seem to be N-glycosylated.

The protein resides in the secreted. Precursor of the egg-yolk proteins that are sources of nutrients during embryonic development. The protein is Vitellogenin-6 (vit-6) of Oscheius tipulae.